Consider the following 437-residue polypeptide: GTPase Der (437 aa).

2 EngA-type G domains span residues 3 to 167 (NIVA…TKKV) and 176 to 352 (PAIA…DIRQ). GTP contacts are provided by residues 9-16 (GRPNVGKS), 56-60 (DTGGW), 119-122 (NKAD), 182-189 (GKPNVGKS), 229-233 (DTAGI), and 294-297 (NKWD). Residues 353-437 (IKIPTSQLNR…TPINIFMREK (85 aa)) enclose the KH-like domain.

Belongs to the TRAFAC class TrmE-Era-EngA-EngB-Septin-like GTPase superfamily. EngA (Der) GTPase family. Associates with the 50S ribosomal subunit.

In terms of biological role, GTPase that plays an essential role in the late steps of ribosome biogenesis. This chain is GTPase Der, found in Azobacteroides pseudotrichonymphae genomovar. CFP2.